The chain runs to 172 residues: Small ribosomal subunit protein uS5 (172 aa).

An S5 DRBM domain is found at Phe17 to Phe80.

The protein belongs to the universal ribosomal protein uS5 family. Part of the 30S ribosomal subunit. Contacts proteins S4 and S8.

In terms of biological role, with S4 and S12 plays an important role in translational accuracy. Its function is as follows. Located at the back of the 30S subunit body where it stabilizes the conformation of the head with respect to the body. The polypeptide is Small ribosomal subunit protein uS5 (Treponema pallidum (strain Nichols)).